The sequence spans 214 residues: DNA-binding protein HupB (214 aa).

An N6-acetyllysine modification is found at Lys3. The residue at position 3 (Lys3) is an N6-succinyllysine. 2 positions are modified to phosphothreonine: Thr43 and Thr45. N6-acetyllysine is present on residues Lys72, Lys86, and Lys103. The interval 100–214 (PAVKRGVGAS…KKATARRGRK (115 aa)) is disordered. Positions 102 to 112 (VKRGVGASAAK) are enriched in low complexity. Lys113 bears the N6-succinyllysine mark. The span at 113–214 (KVAKKAPAKK…KKATARRGRK (102 aa)) shows a compositional bias: basic residues. 2 positions are modified to N6-acetyllysine: Lys116 and Lys133. N6-succinyllysine is present on Lys142. Residues Lys146 and Lys167 each carry the N6-acetyllysine modification.

It belongs to the bacterial histone-like protein family. Long actinobacterial subfamily. In terms of assembly, oligomerizes. Homodimer; the crystallized protein is missing the C-terminal 105 residues. Interacts with topoisomerase 1 (topA). Interacts with Eis. Interacts with NAD-dependent protein deacylase NPD (MRA_1161). Interacts with MRA_0812 CoA transferase. In terms of processing, phosphorylated in vivo on Ser and Thr-residues; the protein is degraded during purification so most sites were not identified, but at least one of Thr-43 and/or Thr-45 are modified in vivo. In vitro at least PknE, PknF and PknB phosphorylate HupB; PknE is the most active and phosphorylates many sites in vitro including Thr-43 and Thr-45. Post-translationally, acetylated on 8 Lys residues in vivo (probably by Eis). In vitro acetylated by Eis on 28 residues (strains H37Rv and H37Ra), many more than those identified in vivo. Also acetylated by MRA_0812. Deacetylated in vitro by NAD-dependent protein deacylase NPD (MRA_1161). Succinylated in vivo and in vitro by MRA_0812 and by Eis; only 3 residues are found to be succinylated in vivo, while 27 are modifed in vitro by MRA_0812 and 32 are succinylated by Eis. NAD-dependent protein deacylase (MRA_1161) desuccinylates this protein.

The protein resides in the cytoplasm. It is found in the nucleoid. It catalyses the reaction 4 Fe(2+) + O2 + 4 H(+) = 4 Fe(3+) + 2 H2O. With respect to regulation, two trans-stilbene derivatives, 4,4'-[(E)-ethene-1,2 diylbis({5[(phenylcarbonyl)amino]benzene-2,1-diyl}sulfonylimino)] dibenzoic acid and its methoxy derivative 4,4'-[1,2-ethenediylbis({5-[(4-methoxybenzoyl)amino]-2,1phenylene}sulfonylimino)] dibenzoic acid, respectively SD1 and SD4, inhibit DNA binding with 50% inhibition at 20 uM for SD1 and 1.7 uM for SD4. SD1 and SD4 have minimal inhibitory concentrations of 400 and 800 uM on strain H37Ra respectively. Functionally, a nucleoid-associated protein (NAP) that plays a role in local chromosome architecture. Binds DNA non-sequence specifically; in vitro phosphorylation of an N-terminal fragment decreases DNA-binding. Stimulates supercoiling relaxation by topoisomerase 1 (Top1, topA), at higher than 80 uM inhibits relaxation, has no effect on DNA gyrase; the effect is independent of DNA-binding. Increases the intervening strand passage activity of Top1 that occurs between the two catalytic trans-esterification reactions. Does not bind ssDNA, probably helps condense chromosomes. Binds dsDNA; in vitro acetylated protein binds 10-fold less well to DNA (note in vitro acetylated protein is more heavily modified than in vivo modified protein). In vitro acetylated protein compacts DNA less well than unmodified protein. In vitro succinylated DNA bind dsDNA less well than unmodified protein (note in vitro succinylated protein is more heavily modified than in vivo modified protein). In terms of biological role, has ferroxidase activity, converts Fe(2+) into Fe(3+). Binds Fe(3+) but not Fe(2+); prevents the generation of hydroxyl radicals by the Fenton reaction and thus protects DNA from damage. May function in iron storage. Its function is as follows. Required for biofilm formation; trimethylation by recombinant human SUV39H1 (a histone methyltransferase) inhibits biofilm formation. Probably influences transcription. RNase E and HupB jointly contribute to cellular adaptation to changing growth conditions and survival during antibiotic treatment and in the host. The protein is DNA-binding protein HupB of Mycobacterium tuberculosis (strain ATCC 25177 / H37Ra).